The sequence spans 267 residues: Undecaprenyl-diphosphatase (267 aa).

The next 7 helical transmembrane spans lie at Pro39–Phe59, Val87–Leu107, Phe112–Val132, Val145–Val165, Pro183–Val203, Leu216–Leu236, and Ser244–Ala264.

The protein belongs to the UppP family.

The protein resides in the cell inner membrane. It carries out the reaction di-trans,octa-cis-undecaprenyl diphosphate + H2O = di-trans,octa-cis-undecaprenyl phosphate + phosphate + H(+). In terms of biological role, catalyzes the dephosphorylation of undecaprenyl diphosphate (UPP). Confers resistance to bacitracin. This Gemmatimonas aurantiaca (strain DSM 14586 / JCM 11422 / NBRC 100505 / T-27) protein is Undecaprenyl-diphosphatase.